The primary structure comprises 122 residues: Large ribosomal subunit protein uL18 (122 aa).

The protein belongs to the universal ribosomal protein uL18 family. In terms of assembly, part of the 50S ribosomal subunit; part of the 5S rRNA/L5/L18/L25 subcomplex. Contacts the 5S and 23S rRNAs.

This is one of the proteins that bind and probably mediate the attachment of the 5S RNA into the large ribosomal subunit, where it forms part of the central protuberance. The sequence is that of Large ribosomal subunit protein uL18 from Mycobacterium ulcerans (strain Agy99).